We begin with the raw amino-acid sequence, 255 residues long: tRNA (guanine-N(1)-)-methyltransferase (255 aa).

Residues glycine 112 and 131-136 (LGDYVL) contribute to the S-adenosyl-L-methionine site.

The protein belongs to the RNA methyltransferase TrmD family. As to quaternary structure, homodimer.

Its subcellular location is the cytoplasm. It carries out the reaction guanosine(37) in tRNA + S-adenosyl-L-methionine = N(1)-methylguanosine(37) in tRNA + S-adenosyl-L-homocysteine + H(+). Its function is as follows. Specifically methylates guanosine-37 in various tRNAs. The polypeptide is tRNA (guanine-N(1)-)-methyltransferase (Lacticaseibacillus paracasei (strain ATCC 334 / BCRC 17002 / CCUG 31169 / CIP 107868 / KCTC 3260 / NRRL B-441) (Lactobacillus paracasei)).